Reading from the N-terminus, the 344-residue chain is Putative 2-hydroxyacid dehydrogenase YoaD (344 aa).

Asp-193 serves as a coordination point for NAD(+). Residue Arg-251 is part of the active site. Residue Asp-275 coordinates NAD(+). Glu-280 is a catalytic residue. His-300 (proton donor) is an active-site residue.

It belongs to the D-isomer specific 2-hydroxyacid dehydrogenase family.

This Bacillus subtilis (strain 168) protein is Putative 2-hydroxyacid dehydrogenase YoaD (yoaD).